The primary structure comprises 316 residues: Large ribosomal subunit protein uL10 (316 aa).

A disordered region spans residues 289–316 (AAAAAPAKEAPKEESEESDEDMGFGLFD).

It belongs to the universal ribosomal protein uL10 family. In terms of assembly, P0 forms a pentameric complex by interaction with dimers of P1 and P2. In terms of processing, phosphorylated.

It is found in the nucleus. Its subcellular location is the cytoplasm. Ribosomal protein P0 is the functional equivalent of E.coli protein L10. The polypeptide is Large ribosomal subunit protein uL10 (RPLP0) (Gallus gallus (Chicken)).